Here is a 247-residue protein sequence, read N- to C-terminus: DNA repair protein RecO (247 aa).

This sequence belongs to the RecO family.

Involved in DNA repair and RecF pathway recombination. The protein is DNA repair protein RecO of Methylocella silvestris (strain DSM 15510 / CIP 108128 / LMG 27833 / NCIMB 13906 / BL2).